Reading from the N-terminus, the 397-residue chain is Mitochondrial inner membrane magnesium transporter LPE10 (397 aa).

A mitochondrion-targeting transit peptide spans 1–48 (MLFIRQLSVIPKAPAFAKFFHTAGLVRQKLSDPNHLAILLQKNLAQRN). The chain crosses the membrane as a helical span at residues 318 to 338 (LMLLGLRFSIGLLSLAGSIFI). The short motif at 342–345 (YGMN) is the YGMN element. Residues 355 to 375 (VGFPVVSTLGVILMAYLFAFS) form a helical membrane-spanning segment.

It belongs to the CorA metal ion transporter (MIT) (TC 1.A.35) family. In terms of assembly, forms homooligomers. Interacts with MRS2.

It localises to the mitochondrion inner membrane. In terms of biological role, mitochondrial inner membrane magnesium transporter required for mitochondrial magnesium homeostasis. Modulates the conductance of the MRS2 channel. Involved in the splicing of mRNA group II introns in mitochondria by affecting mitochondrial magnesium concentrations, which are critical for group II intron splicing. The protein is Mitochondrial inner membrane magnesium transporter LPE10 (LPE10) of Kluyveromyces lactis (strain ATCC 8585 / CBS 2359 / DSM 70799 / NBRC 1267 / NRRL Y-1140 / WM37) (Yeast).